The primary structure comprises 341 residues: Glycerol-3-phosphate dehydrogenase [NAD(P)+] (341 aa).

NADPH contacts are provided by Ser15, Trp16, Arg36, and Lys110. Residues Lys110, Gly139, and Ser141 each coordinate sn-glycerol 3-phosphate. Ala143 contributes to the NADPH binding site. Lys194, Asp247, Ser257, Arg258, and Asn259 together coordinate sn-glycerol 3-phosphate. The active-site Proton acceptor is the Lys194. Arg258 lines the NADPH pocket. 2 residues coordinate NADPH: Val282 and Glu284.

The protein belongs to the NAD-dependent glycerol-3-phosphate dehydrogenase family.

It localises to the cytoplasm. It catalyses the reaction sn-glycerol 3-phosphate + NAD(+) = dihydroxyacetone phosphate + NADH + H(+). The enzyme catalyses sn-glycerol 3-phosphate + NADP(+) = dihydroxyacetone phosphate + NADPH + H(+). It functions in the pathway membrane lipid metabolism; glycerophospholipid metabolism. Functionally, catalyzes the reduction of the glycolytic intermediate dihydroxyacetone phosphate (DHAP) to sn-glycerol 3-phosphate (G3P), the key precursor for phospholipid synthesis. In Stenotrophomonas maltophilia (strain R551-3), this protein is Glycerol-3-phosphate dehydrogenase [NAD(P)+].